The following is a 121-amino-acid chain: Large ribosomal subunit protein eL18 (121 aa).

It belongs to the eukaryotic ribosomal protein eL18 family. As to quaternary structure, part of the 50S ribosomal subunit.

The polypeptide is Large ribosomal subunit protein eL18 (Thermococcus kodakarensis (strain ATCC BAA-918 / JCM 12380 / KOD1) (Pyrococcus kodakaraensis (strain KOD1))).